Here is a 334-residue protein sequence, read N- to C-terminus: Protein-methionine-sulfoxide reductase catalytic subunit MsrP (334 aa).

Residues 1–44 constitute a signal peptide (tat-type signal); that stretch reads MKKNQFLKESDVTAESVFFMKRRQVLKALGISAAALSLPHAAHA. Mo-molybdopterin contacts are provided by residues asparagine 88, 91–92, cysteine 146, threonine 181, asparagine 233, arginine 238, and 249–251; these read YE and GIK.

Belongs to the MsrP family. In terms of assembly, heterodimer of a catalytic subunit (MsrP) and a heme-binding subunit (MsrQ). It depends on Mo-molybdopterin as a cofactor. Predicted to be exported by the Tat system. The position of the signal peptide cleavage has not been experimentally proven.

The protein resides in the periplasm. The catalysed reaction is L-methionyl-[protein] + a quinone + H2O = L-methionyl-(S)-S-oxide-[protein] + a quinol. It carries out the reaction L-methionyl-[protein] + a quinone + H2O = L-methionyl-(R)-S-oxide-[protein] + a quinol. Its function is as follows. Part of the MsrPQ system that repairs oxidized periplasmic proteins containing methionine sulfoxide residues (Met-O), using respiratory chain electrons. Thus protects these proteins from oxidative-stress damage caused by reactive species of oxygen and chlorine generated by the host defense mechanisms. MsrPQ is essential for the maintenance of envelope integrity under bleach stress, rescuing a wide series of structurally unrelated periplasmic proteins from methionine oxidation, including the primary periplasmic chaperone SurA and the lipoprotein Pal. The catalytic subunit MsrP is non-stereospecific, being able to reduce both (R-) and (S-) diastereoisomers of methionine sulfoxide. The protein is Protein-methionine-sulfoxide reductase catalytic subunit MsrP of Escherichia coli O17:K52:H18 (strain UMN026 / ExPEC).